Consider the following 258-residue polypeptide: uncharacterized protein (258 aa).

This is an uncharacterized protein from Haemophilus influenzae (Bacteriophage HP1).